We begin with the raw amino-acid sequence, 153 residues long: Putative pre-16S rRNA nuclease (153 aa).

This sequence belongs to the YqgF nuclease family.

It localises to the cytoplasm. Could be a nuclease involved in processing of the 5'-end of pre-16S rRNA. The protein is Putative pre-16S rRNA nuclease of Prochlorococcus marinus (strain AS9601).